Here is a 1793-residue protein sequence, read N- to C-terminus: uncharacterized protein (1793 aa).

Disordered regions lie at residues 156 to 189, 204 to 362, and 407 to 505; these read ARQA…ASSQ, QRES…PPKV, and ASFG…SGAA. The span at 166 to 175 shows a compositional bias: polar residues; it reads SSAQDSQELK. Residues 227 to 237 show a composition bias toward basic and acidic residues; that stretch reads SPKEKAQDEPS. Residues 238 to 247 show a composition bias toward polar residues; the sequence is SKTPSPQNNP. Over residues 248-258 the composition is skewed to low complexity; it reads ASSQLSRSQHS. Residues 277–288 show a composition bias toward basic and acidic residues; it reads KAEEDGLSKMED. Residues 289 to 307 show a composition bias toward low complexity; the sequence is STTSTGALATSSSSLGFES. Residues 317–342 are compositionally biased toward gly residues; the sequence is AVGGEGEKISGGGGGGKGGGGGGAGD. Positions 434-450 are enriched in low complexity; sequence STTPSTNTTRTPSPTSS. The segment covering 463-476 has biased composition (polar residues); sequence DTSSTEVGSGPSDS. Low complexity predominate over residues 485 to 505; the sequence is PGTAPLTEPLPETPEAASGAA. Threonine 733 carries the post-translational modification Phosphothreonine. Disordered regions lie at residues 757-809, 829-917, 1090-1147, 1161-1187, 1229-1249, 1408-1465, and 1482-1567; these read RSES…SKFA, MERG…FTDG, RDIR…GSGS, QRED…NSSS, QKTP…ATKP, TGGV…KSNS, and GELL…PLPF. 2 stretches are compositionally biased toward basic and acidic residues: residues 829-839 and 846-872; these read MERGEVMDTSH and KETE…HSEA. The segment covering 1113 to 1123 has biased composition (low complexity); the sequence is KGSGDSSDKGS. Basic and acidic residues predominate over residues 1161–1174; sequence QREDSMDREPRESM. Serine 1187 is modified (phosphoserine). The span at 1231–1246 shows a compositional bias: basic and acidic residues; the sequence is TPEKLKEEEVKEEGKA. Residues 1513–1528 are compositionally biased toward low complexity; that stretch reads SQVPSSSKGSQVSGTS. A compositionally biased stretch (pro residues) spans 1546–1555; it reads PPGPQSPEHP. Arginine 1774 is modified (omega-N-methylarginine).

In terms of tissue distribution, expressed in muscle, heart, kidney and liver but barely detectable in lung, pancreas and brain. In liver veins, expressed in hepatic vein, extrahepatic portal vein and intrahepatic portal vein.

This is an uncharacterized protein from Homo sapiens (Human).